Reading from the N-terminus, the 218-residue chain is Probable GTP-binding protein EngB (218 aa).

Residues 21–192 form the EngB-type G domain; sequence NAPQIALAGR…WQELHRLAFP (172 aa). Residues 29–36, 56–60, 75–78, 142–145, and 171–173 contribute to the GTP site; these read GRSNVGKS, GKTRS, DLPG, TKAD, and FSS. Mg(2+)-binding residues include Ser36 and Thr58. The interval 194–218 is disordered; that stretch reads MAFDTPSDGAPEPADEPEAASERAE.

This sequence belongs to the TRAFAC class TrmE-Era-EngA-EngB-Septin-like GTPase superfamily. EngB GTPase family. Mg(2+) serves as cofactor.

In terms of biological role, necessary for normal cell division and for the maintenance of normal septation. The protein is Probable GTP-binding protein EngB of Oleidesulfovibrio alaskensis (strain ATCC BAA-1058 / DSM 17464 / G20) (Desulfovibrio alaskensis).